Reading from the N-terminus, the 466-residue chain is Putative chitinase (466 aa).

Positions 1 to 17 (MYLTIWLVSILALGTWG) are cleaved as a signal peptide. In terms of domain architecture, GH18 spans 20–380 (FNRFCHYNSW…MAVIHGLNAY (361 aa)). Cysteine 24 and cysteine 49 are disulfide-bonded. Glutamate 141 acts as the Proton donor in catalysis. Residues 408–442 (NYRRRNQQEKVAEMEQRIRHLEQELQQSMGNMAYE) are a coiled coil.

This sequence belongs to the glycosyl hydrolase 18 family. In terms of tissue distribution, prismatic layer of shell (at protein level). Expressed primarily in the mantle with highest level in the mantle edge and lower level in the mantle pallium.

The protein localises to the secreted. The catalysed reaction is Random endo-hydrolysis of N-acetyl-beta-D-glucosaminide (1-&gt;4)-beta-linkages in chitin and chitodextrins.. This chain is Putative chitinase, found in Pinctada maxima (Silver-lipped pearl oyster).